The primary structure comprises 513 residues: Probable DNA ligase (513 aa).

E213 serves as a coordination point for ATP. The active-site N6-AMP-lysine intermediate is K215. ATP-binding residues include R220, R235, E264, F304, R376, and K382.

This sequence belongs to the ATP-dependent DNA ligase family. Mg(2+) is required as a cofactor.

The enzyme catalyses ATP + (deoxyribonucleotide)n-3'-hydroxyl + 5'-phospho-(deoxyribonucleotide)m = (deoxyribonucleotide)n+m + AMP + diphosphate.. DNA ligase that seals nicks in double-stranded DNA during DNA replication, DNA recombination and DNA repair. The sequence is that of Probable DNA ligase from Anaeromyxobacter dehalogenans (strain 2CP-1 / ATCC BAA-258).